The primary structure comprises 443 residues: Ribosomal protein uS12 methylthiotransferase RimO (443 aa).

The 111-residue stretch at 8–118 (PKVGFVSLGC…VVNAVHEVVP (111 aa)) folds into the MTTase N-terminal domain. [4Fe-4S] cluster-binding residues include Cys17, Cys53, Cys82, Cys151, Cys155, and Cys158. The Radical SAM core domain occupies 137 to 375 (LTPRHYAYLK…MAHQQAISAA (239 aa)). One can recognise a TRAM domain in the interval 378–443 (QLRIGKEIDV…DEYDMWAEPI (66 aa)).

This sequence belongs to the methylthiotransferase family. RimO subfamily. The cofactor is [4Fe-4S] cluster.

Its subcellular location is the cytoplasm. It catalyses the reaction L-aspartate(89)-[ribosomal protein uS12]-hydrogen + (sulfur carrier)-SH + AH2 + 2 S-adenosyl-L-methionine = 3-methylsulfanyl-L-aspartate(89)-[ribosomal protein uS12]-hydrogen + (sulfur carrier)-H + 5'-deoxyadenosine + L-methionine + A + S-adenosyl-L-homocysteine + 2 H(+). Its function is as follows. Catalyzes the methylthiolation of an aspartic acid residue of ribosomal protein uS12. The chain is Ribosomal protein uS12 methylthiotransferase RimO from Pseudomonas putida (strain ATCC 700007 / DSM 6899 / JCM 31910 / BCRC 17059 / LMG 24140 / F1).